A 552-amino-acid chain; its full sequence is Polypyrimidine tract-binding protein 3 (552 aa).

M1 is modified (N-acetylmethionine). S17 carries the post-translational modification Phosphoserine. Residues 32 to 43 (MNSSTPSTANGN) are compositionally biased toward polar residues. Residues 32 to 55 (MNSSTPSTANGNDSKKFKRDRPPC) are disordered. RRM domains are found at residues 59–143 (RVLH…NLPN), 182–258 (LRII…FSKL), and 358–432 (SVLL…LSKH). A Glycyl lysine isopeptide (Lys-Gly) (interchain with G-Cter in SUMO2) cross-link involves residue K65. Phosphotyrosine is present on Y127. T138 bears the Phosphothreonine mark. A Glycyl lysine isopeptide (Lys-Gly) (interchain with G-Cter in SUMO2) cross-link involves residue K216. N6-acetyllysine is present on K423. The segment at 435–455 (VQLPREGQEDQGLTKDFSNSP) is disordered. At S454 the chain carries Phosphoserine. An RRM 4 domain is found at 475–550 (ATLHLSNIPP…HHLRVSFSKS (76 aa)).

Interacts with THBS4 (via the acidic amphipathic C-terminus). As to expression, expressed in several hematopoietic cell lines examined.

Functionally, RNA-binding protein that mediates pre-mRNA alternative splicing regulation. Plays a role in the regulation of cell proliferation, differentiation and migration. Positive regulator of EPO-dependent erythropoiesis. Participates in cell differentiation regulation by repressing tissue-specific exons. Promotes FAS exon 6 skipping. Binds RNA, preferentially to both poly(G) and poly(U). The chain is Polypyrimidine tract-binding protein 3 (PTBP3) from Homo sapiens (Human).